A 498-amino-acid chain; its full sequence is WD repeat-containing protein 55 homolog (498 aa).

Residues 1-131 (MHTHNNFKTP…ATFDLDEDDE (131 aa)) are disordered. 2 stretches are compositionally biased toward acidic residues: residues 12 to 23 (DEDELDDLDEDM) and 31 to 48 (IEQE…EYDL). WD repeat units lie at residues 154-193 (KLED…NKLL), 198-237 (VHSK…LKKL), 241-279 (AHDD…AIFE), 282-321 (ELED…MYVQ), 324-363 (PYEE…YHCD), and 408-447 (QHNM…DFGE).

Belongs to the WD repeat WDR55 family.

In Drosophila simulans (Fruit fly), this protein is WD repeat-containing protein 55 homolog.